The primary structure comprises 334 residues: Serine/threonine-protein kinase (334 aa).

In terms of domain architecture, Protein kinase spans 53–333; sequence FEVLQPLQSG…DEILNFGMWT (281 aa). ATP contacts are provided by residues 59 to 67 and K82; that span reads LQSGSEGRV. D167 functions as the Proton acceptor in the catalytic mechanism.

It belongs to the protein kinase superfamily. Ser/Thr protein kinase family.

It catalyses the reaction L-seryl-[protein] + ATP = O-phospho-L-seryl-[protein] + ADP + H(+). The enzyme catalyses L-threonyl-[protein] + ATP = O-phospho-L-threonyl-[protein] + ADP + H(+). Its function is as follows. Able to phosphorylate in vitro the major virion phosphoprotein phosphorylated in vivo. The protein is Serine/threonine-protein kinase (PK) of Sus scrofa (Pig).